Here is a 249-residue protein sequence, read N- to C-terminus: Polyhedrin (249 aa).

Belongs to the polyhedrin family.

Its function is as follows. Major component of the virus occlusion bodies, which are large proteinaceous structures (polyhedra), that protect the virus from the outside environment for extended periods until they are ingested by insect larvae. This chain is Polyhedrin (PH), found in Lepidoptera (butterflies and moths).